We begin with the raw amino-acid sequence, 395 residues long: FAD-dependent urate hydroxylase (395 aa).

Residues G11, 30 to 31, S43, and M125 contribute to the FAD site; that span reads ER. Substrate contacts are provided by residues N180, R206, and 218–220; that span reads YFF. Residues D287 and 297–301 contribute to the FAD site; that span reads GQGGC.

The protein belongs to the FAD-dependent urate hydroxylase family. As to quaternary structure, monomer. FAD is required as a cofactor.

The catalysed reaction is urate + NADH + O2 + H(+) = 5-hydroxyisourate + NAD(+) + H2O. The protein operates within purine metabolism; urate degradation. Its function is as follows. Catalyzes the hydroxylation of urate to 5-hydroxyisourate (HIU). Is likely to be involved in the urate degradation pathway to allantoin. Prefers NADH over NADPH as the electron donor. This is FAD-dependent urate hydroxylase from Mycolicibacterium vanbaalenii (strain DSM 7251 / JCM 13017 / BCRC 16820 / KCTC 9966 / NRRL B-24157 / PYR-1) (Mycobacterium vanbaalenii).